The sequence spans 204 residues: Holliday junction branch migration complex subunit RuvA (204 aa).

A domain I region spans residues 1 to 64; the sequence is MIGKLKGTID…EDQLKLFGFM (64 aa). The interval 65 to 143 is domain II; sequence TALEREWFNL…AFAGEAINIA (79 aa). The tract at residues 144-151 is flexible linker; sequence LKQELGEG. The segment at 152–204 is domain III; that stretch reads VAAAPVADAVSALTNLGYSRDQAANAVAAAMKTAGDGADSAKLIRLGLKELAR.

This sequence belongs to the RuvA family. Homotetramer. Forms an RuvA(8)-RuvB(12)-Holliday junction (HJ) complex. HJ DNA is sandwiched between 2 RuvA tetramers; dsDNA enters through RuvA and exits via RuvB. An RuvB hexamer assembles on each DNA strand where it exits the tetramer. Each RuvB hexamer is contacted by two RuvA subunits (via domain III) on 2 adjacent RuvB subunits; this complex drives branch migration. In the full resolvosome a probable DNA-RuvA(4)-RuvB(12)-RuvC(2) complex forms which resolves the HJ.

The protein resides in the cytoplasm. Functionally, the RuvA-RuvB-RuvC complex processes Holliday junction (HJ) DNA during genetic recombination and DNA repair, while the RuvA-RuvB complex plays an important role in the rescue of blocked DNA replication forks via replication fork reversal (RFR). RuvA specifically binds to HJ cruciform DNA, conferring on it an open structure. The RuvB hexamer acts as an ATP-dependent pump, pulling dsDNA into and through the RuvAB complex. HJ branch migration allows RuvC to scan DNA until it finds its consensus sequence, where it cleaves and resolves the cruciform DNA. The protein is Holliday junction branch migration complex subunit RuvA of Rhizobium etli (strain CIAT 652).